A 196-amino-acid chain; its full sequence is Phosphoheptose isomerase (196 aa).

One can recognise an SIS domain in the interval 38 to 196 (LIAGYRAGAR…VEHALFAPRQ (159 aa)). 53-55 (NGG) serves as a coordination point for substrate. Zn(2+) contacts are provided by His62 and Glu66. Substrate contacts are provided by residues Glu66, 95-96 (ND), 121-123 (STS), Ser126, and Gln173. Zn(2+)-binding residues include Gln173 and His181.

Belongs to the SIS family. GmhA subfamily. It depends on Zn(2+) as a cofactor.

It localises to the cytoplasm. It carries out the reaction 2 D-sedoheptulose 7-phosphate = D-glycero-alpha-D-manno-heptose 7-phosphate + D-glycero-beta-D-manno-heptose 7-phosphate. Its pathway is carbohydrate biosynthesis; D-glycero-D-manno-heptose 7-phosphate biosynthesis; D-glycero-alpha-D-manno-heptose 7-phosphate and D-glycero-beta-D-manno-heptose 7-phosphate from sedoheptulose 7-phosphate: step 1/1. Its function is as follows. Catalyzes the isomerization of sedoheptulose 7-phosphate in D-glycero-D-manno-heptose 7-phosphate. The chain is Phosphoheptose isomerase from Mycobacterium bovis (strain ATCC BAA-935 / AF2122/97).